The sequence spans 540 residues: Ecdysone 20-monooxygenase (540 aa).

A heme-binding site is contributed by cysteine 488.

Belongs to the cytochrome P450 family. The cofactor is heme. Strong expression by embryonic stage 10 in epidermis, decreases significantly in older embryos. Third instar larvae show expression in the midgut copper cells, Malpighian tubules and fat body. In the adult ovaries, expression is seen in both nurse cells and centripetally migrating follicle cells.

The protein localises to the mitochondrion membrane. It catalyses the reaction ecdysone + AH2 + O2 = 20-hydroxyecdysone + A + H2O. The protein operates within steroid biosynthesis; ecdysteroid biosynthesis. In terms of biological role, required for CNS development; midline glial cells. Involved in the metabolism of insect hormones; responsible for all ecdysone 20-monooxygenase activity during embryonic, larval and adult stages. May be involved in the breakdown of synthetic insecticides. The sequence is that of Ecdysone 20-monooxygenase (shd) from Drosophila melanogaster (Fruit fly).